The sequence spans 769 residues: Elongation factor G, mitochondrial (769 aa).

The N-terminal 42 residues, 1 to 42 (MSKFLRGISSISSASLKARASNFGVFHGVCSARNLHQSRLCL), are a transit peptide targeting the mitochondrion. A tr-type G domain is found at 74 to 356 (TRLRNIGVSA…AVVDYLPQPN (283 aa)). Residues 83–90 (AHIDSGKT), 154–158 (DTPGH), and 208–211 (NKMD) each bind GTP.

Belongs to the TRAFAC class translation factor GTPase superfamily. Classic translation factor GTPase family. EF-G/EF-2 subfamily.

It is found in the mitochondrion. The protein operates within protein biosynthesis; polypeptide chain elongation. Functionally, mitochondrial GTPase that catalyzes the GTP-dependent ribosomal translocation step during translation elongation. During this step, the ribosome changes from the pre-translocational (PRE) to the post-translocational (POST) state as the newly formed A-site-bound peptidyl-tRNA and P-site-bound deacylated tRNA move to the P and E sites, respectively. Catalyzes the coordinated movement of the two tRNA molecules, the mRNA and conformational changes in the ribosome. In Debaryomyces hansenii (strain ATCC 36239 / CBS 767 / BCRC 21394 / JCM 1990 / NBRC 0083 / IGC 2968) (Yeast), this protein is Elongation factor G, mitochondrial.